The following is an 82-amino-acid chain: Turripeptide Gsg9.1 (82 aa).

Residues methionine 1 to glycine 23 form the signal peptide. A propeptide spanning residues leucine 24–arginine 46 is cleaved from the precursor. Residues proline 49 and proline 50 each carry the 4-hydroxyproline modification. Cystine bridges form between cysteine 53/cysteine 68, cysteine 58/cysteine 72, and cysteine 64/cysteine 79. 2 positions are modified to 4-carboxyglutamate: glutamate 60 and glutamate 63.

This sequence belongs to the Pg turripeptide superfamily. In terms of tissue distribution, expressed by the venom duct.

It is found in the secreted. The polypeptide is Turripeptide Gsg9.1 (Gemmula sogodensis (Gem-turris)).